Consider the following 114-residue polypeptide: Large ribosomal subunit protein uL22 (114 aa).

This sequence belongs to the universal ribosomal protein uL22 family. As to quaternary structure, part of the 50S ribosomal subunit.

In terms of biological role, this protein binds specifically to 23S rRNA; its binding is stimulated by other ribosomal proteins, e.g. L4, L17, and L20. It is important during the early stages of 50S assembly. It makes multiple contacts with different domains of the 23S rRNA in the assembled 50S subunit and ribosome. Functionally, the globular domain of the protein is located near the polypeptide exit tunnel on the outside of the subunit, while an extended beta-hairpin is found that lines the wall of the exit tunnel in the center of the 70S ribosome. The chain is Large ribosomal subunit protein uL22 from Streptococcus pneumoniae (strain Taiwan19F-14).